The primary structure comprises 876 residues: Eukaryotic translation initiation factor 3 subunit C (876 aa).

2 disordered regions span residues 1 to 25 (MSRF…VVRA) and 154 to 233 (SXFR…IREQ). Acidic residues predominate over residues 11–20 (SESESSSEDE). Composition is skewed to basic and acidic residues over residues 154–172 (SXFR…KDSS) and 182–192 (KPIKEKPKPEP). Over residues 206–219 (SMDWASSSSDSSFS) the composition is skewed to low complexity. The region spanning 632–808 (FHMHINLELL…ECAILHRSEP (177 aa)) is the PCI domain. The tract at residues 839–876 (FFQRGGAQRGEGRQRERPREGWNRRTRNRRRDDERADD) is disordered. The segment covering 848-861 (GEGRQRERPREGWN) has biased composition (basic and acidic residues).

It belongs to the eIF-3 subunit C family. Component of the eukaryotic translation initiation factor 3 (eIF-3) complex.

The protein localises to the cytoplasm. Component of the eukaryotic translation initiation factor 3 (eIF-3) complex, which is involved in protein synthesis of a specialized repertoire of mRNAs and, together with other initiation factors, stimulates binding of mRNA and methionyl-tRNAi to the 40S ribosome. The eIF-3 complex specifically targets and initiates translation of a subset of mRNAs involved in cell proliferation. The protein is Eukaryotic translation initiation factor 3 subunit C of Bombyx mori (Silk moth).